A 217-amino-acid polypeptide reads, in one-letter code: Trichothecene biosynthesis transcription regulator TRI6 (217 aa).

The segment at 185–215 adopts a C2H2-type zinc-finger fold; it reads VRCPWHDQEGQQCLRVFSRVDNMRDHYRRIH.

Its subcellular location is the nucleus. Transcriptional activator of part of the core trichothecene biosynthesis cluster. This chain is Trichothecene biosynthesis transcription regulator TRI6, found in Fusarium sporotrichioides.